The chain runs to 154 residues: RNA-binding protein PAB1135 (154 aa).

In terms of assembly, homodimer in solution.

In vitro, binds efficiently double-stranded RNAs in a non-sequence specific manner. In Pyrococcus abyssi (strain GE5 / Orsay), this protein is RNA-binding protein PAB1135.